Consider the following 184-residue polypeptide: Ribosome-recycling factor (184 aa).

This sequence belongs to the RRF family.

It is found in the cytoplasm. In terms of biological role, responsible for the release of ribosomes from messenger RNA at the termination of protein biosynthesis. May increase the efficiency of translation by recycling ribosomes from one round of translation to another. This Borrelia hermsii (strain HS1 / DAH) protein is Ribosome-recycling factor.